The primary structure comprises 183 residues: Protein AC4 (183 aa).

This sequence belongs to the geminiviridae protein AC4/C4 family.

In terms of biological role, pathogenicity determinant. May act as a suppressor of RNA-mediated gene silencing, also known as post-transcriptional gene silencing (PTGS), a mechanism of plant viral defense that limits the accumulation of viral RNAs. The sequence is that of Protein AC4 from African cassava mosaic virus (isolate West Kenyan 844) (ACMV).